We begin with the raw amino-acid sequence, 405 residues long: D-threonate kinase (405 aa).

Substrate contacts are provided by residues Asp-12, Arg-59, and 88-91; that span reads KVDS. ATP-binding positions include Ser-243, 337–340, and Gly-383; that span reads GGDG.

It belongs to the four-carbon acid sugar kinase family.

It catalyses the reaction D-threonate + ATP = 4-O-phospho-D-threonate + ADP + H(+). Its function is as follows. Catalyzes the ATP-dependent phosphorylation of D-threonate to D-threonate 4-phosphate. Can also phosphorylate 4-hydroxy-L-threonine, with lower efficiency. The protein is D-threonate kinase of Bordetella bronchiseptica (strain ATCC BAA-588 / NCTC 13252 / RB50) (Alcaligenes bronchisepticus).